A 348-amino-acid chain; its full sequence is Transmembrane protease serine 12 (348 aa).

An N-terminal signal peptide occupies residues 1–20; sequence MRLGLLSVALLFVGSSHLYS. Topologically, residues 21 to 324 are extracellular; that stretch reads DHYSPSGRHR…EHFFHASTQG (304 aa). The interval 24 to 46 is disordered; the sequence is SPSGRHRLGPSPEPAASSQQAEA. Residues 78–318 form the Peptidase S1 domain; that stretch reads IIGGTEAQAG…YQKWLTEHFF (241 aa). Residues cysteine 107 and cysteine 123 are joined by a disulfide bond. Active-site charge relay system residues include histidine 122 and aspartate 171. Cystine bridges form between cysteine 206-cysteine 274, cysteine 237-cysteine 253, and cysteine 264-cysteine 294. 2 N-linked (GlcNAc...) asparagine glycosylation sites follow: asparagine 219 and asparagine 249. Serine 268 acts as the Charge relay system in catalysis. A helical transmembrane segment spans residues 325–345; sequence ILTINILRGQILIALCFVILL. The Cytoplasmic portion of the chain corresponds to 346 to 348; the sequence is ATT.

Belongs to the peptidase S1 family. In terms of tissue distribution, in testis, expressed in spermatocytes and spermatids (at protein level).

It is found in the cell membrane. The protein localises to the cytoplasmic vesicle. Its subcellular location is the secretory vesicle. It localises to the acrosome. Functionally, required for male fertility. Plays a critical role in sperm capacitation and acrosome reactions during fertilization, and also plays a role in the regulation of proteins involved in spermatogenesis. Regulates protein pathways that promote chromosomal synapsis formation, double-strand break repair, formation of the inner mitochondrial membrane cristae and apoptosis in developing sperm. Required for normal sperm motility and binding to the zona pellucida, potentially via a role in ADAM3 protein maturation. In Homo sapiens (Human), this protein is Transmembrane protease serine 12.